A 287-amino-acid polypeptide reads, in one-letter code: MPELPEVETVRQGLAQWVTGRRIAEVEVRHPRAIRRHPAGAAHFADVLVGTTVRDVRRRGKYLWLPLDSGDAVIGHLGMSGQLLLQPGAAPDEAHLRVRFRFADDGPELRFVDQRTFGGLSVSAGGAEMPTEIAHIARDPLDPEFSEAAFVAALRRRRTEVKRALLDQTLLSGVGNIYADEALWRARLHGARPADGLTGPAALRLLGHVRDVLGEAIKEGGTSFDALYVNVNGESGYFDRALNVYGRADQPCRRCGTPVRREAFMNRSSYSCPRCQPRPRRALQASG.

Residue Pro2 is the Schiff-base intermediate with DNA of the active site. Catalysis depends on Glu3, which acts as the Proton donor. Catalysis depends on Lys61, which acts as the Proton donor; for beta-elimination activity. Residues His95, Arg115, and Arg157 each contribute to the DNA site. The FPG-type zinc-finger motif lies at 243–277 (NVYGRADQPCRRCGTPVRREAFMNRSSYSCPRCQP). The Proton donor; for delta-elimination activity role is filled by Arg267.

It belongs to the FPG family. In terms of assembly, monomer. Zn(2+) serves as cofactor.

The enzyme catalyses Hydrolysis of DNA containing ring-opened 7-methylguanine residues, releasing 2,6-diamino-4-hydroxy-5-(N-methyl)formamidopyrimidine.. The catalysed reaction is 2'-deoxyribonucleotide-(2'-deoxyribose 5'-phosphate)-2'-deoxyribonucleotide-DNA = a 3'-end 2'-deoxyribonucleotide-(2,3-dehydro-2,3-deoxyribose 5'-phosphate)-DNA + a 5'-end 5'-phospho-2'-deoxyribonucleoside-DNA + H(+). Its function is as follows. Involved in base excision repair of DNA damaged by oxidation or by mutagenic agents. Acts as a DNA glycosylase that recognizes and removes damaged bases. Has a preference for oxidized purines, such as 7,8-dihydro-8-oxoguanine (8-oxoG). Has AP (apurinic/apyrimidinic) lyase activity and introduces nicks in the DNA strand. Cleaves the DNA backbone by beta-delta elimination to generate a single-strand break at the site of the removed base with both 3'- and 5'-phosphates. This Salinispora arenicola (strain CNS-205) protein is Formamidopyrimidine-DNA glycosylase.